Consider the following 302-residue polypeptide: Urease accessory protein UreD 2 (302 aa).

The protein belongs to the UreD family. UreD, UreF and UreG form a complex that acts as a GTP-hydrolysis-dependent molecular chaperone, activating the urease apoprotein by helping to assemble the nickel containing metallocenter of UreC. The UreE protein probably delivers the nickel.

The protein resides in the cytoplasm. In terms of biological role, required for maturation of urease via the functional incorporation of the urease nickel metallocenter. The sequence is that of Urease accessory protein UreD 2 from Brucella ovis (strain ATCC 25840 / 63/290 / NCTC 10512).